The primary structure comprises 297 residues: Acetyl-coenzyme A carboxylase carboxyl transferase subunit beta (297 aa).

The CoA carboxyltransferase N-terminal domain occupies 27-296 (LWHKCPSCEA…PEAAKEVAAV (270 aa)). Residues C31, C34, C50, and C53 each coordinate Zn(2+). A C4-type zinc finger spans residues 31 to 53 (CPSCEAVLYRPELEKTLDVCPKC).

It belongs to the AccD/PCCB family. In terms of assembly, acetyl-CoA carboxylase is a heterohexamer composed of biotin carboxyl carrier protein (AccB), biotin carboxylase (AccC) and two subunits each of ACCase subunit alpha (AccA) and ACCase subunit beta (AccD). Zn(2+) is required as a cofactor.

The protein localises to the cytoplasm. It carries out the reaction N(6)-carboxybiotinyl-L-lysyl-[protein] + acetyl-CoA = N(6)-biotinyl-L-lysyl-[protein] + malonyl-CoA. Its pathway is lipid metabolism; malonyl-CoA biosynthesis; malonyl-CoA from acetyl-CoA: step 1/1. Its function is as follows. Component of the acetyl coenzyme A carboxylase (ACC) complex. Biotin carboxylase (BC) catalyzes the carboxylation of biotin on its carrier protein (BCCP) and then the CO(2) group is transferred by the transcarboxylase to acetyl-CoA to form malonyl-CoA. This is Acetyl-coenzyme A carboxylase carboxyl transferase subunit beta from Pseudomonas entomophila (strain L48).